Here is a 311-residue protein sequence, read N- to C-terminus: Methionyl-tRNA formyltransferase (311 aa).

112 to 115 (SLLP) contributes to the (6S)-5,6,7,8-tetrahydrofolate binding site.

The protein belongs to the Fmt family.

It carries out the reaction L-methionyl-tRNA(fMet) + (6R)-10-formyltetrahydrofolate = N-formyl-L-methionyl-tRNA(fMet) + (6S)-5,6,7,8-tetrahydrofolate + H(+). In terms of biological role, attaches a formyl group to the free amino group of methionyl-tRNA(fMet). The formyl group appears to play a dual role in the initiator identity of N-formylmethionyl-tRNA by promoting its recognition by IF2 and preventing the misappropriation of this tRNA by the elongation apparatus. The sequence is that of Methionyl-tRNA formyltransferase from Rhizobium leguminosarum bv. trifolii (strain WSM2304).